Here is a 232-residue protein sequence, read N- to C-terminus: Protein FAM246B (232 aa).

Basic and acidic residues predominate over residues 19–31 (EVLRRVTGRRRDP). 4 disordered regions span residues 19-47 (EVLRRVTGRRRDPGPQSNGPGREDARAPG), 80-101 (AAGAGERTGAHSRGSVCSVCGE), 151-179 (ALLPPPPPSPPARREPRAVPRAAPRGPTL), and 191-232 (AASR…GGGD). Residues 211 to 220 (APARKNHKKM) show a composition bias toward basic residues.

The protein belongs to the FAM246 family.

This Homo sapiens (Human) protein is Protein FAM246B.